The sequence spans 300 residues: uncharacterized protein (300 aa).

The active-site Proton acceptor is histidine 274.

The protein belongs to the AB hydrolase superfamily. In terms of assembly, monomer.

It catalyses the reaction a carboxylic ester + H2O = an alcohol + a carboxylate + H(+). This is an uncharacterized protein from Bacillus subtilis (strain 168).